A 619-amino-acid chain; its full sequence is Probable transporter mch1 (619 aa).

The next 12 membrane-spanning stretches (helical) occupy residues 88 to 108, 120 to 140, 147 to 167, 184 to 204, 219 to 239, 261 to 281, 377 to 397, 428 to 448, 480 to 500, 515 to 535, 541 to 561, and 589 to 609; these read VISC…PLFL, AVSI…GYLC, PLAL…AFAY, VMVV…LAAV, IMLA…SQVA, FLFL…GLRI, TMWW…AYIN, IIAL…DFFA, LAFL…LSSP, LIGL…SVVW, GTNW…WGVI, and FWAV…ILAW.

This sequence belongs to the major facilitator superfamily.

It is found in the vacuole membrane. Probable transporter. The chain is Probable transporter mch1 (mch1) from Aspergillus fumigatus (strain ATCC MYA-4609 / CBS 101355 / FGSC A1100 / Af293) (Neosartorya fumigata).